We begin with the raw amino-acid sequence, 369 residues long: Cyanuric acid amidohydrolase (369 aa).

Residues 1–100 form an RU A region; that stretch reads MPRRAEILRL…HWLVIAAREA (100 aa). Substrate contacts are provided by residues Arg53 and 81–82; that span reads SG. The tract at residues 106–242 is RU B; sequence ALAVGQARTP…HEVVVMGMSP (137 aa). Lys155 is an active-site residue. Residues Arg187 and 225-226 each bind substrate; that span reads SA. The active-site Nucleophile is Ser225. Positions 248-369 are RU C; the sequence is LVIDHAVMAD…ARRSGAAGPA (122 aa). Glu296 contacts Mg(2+). Substrate is bound by residues Arg323 and 342 to 343; that span reads SG. Mg(2+) contacts are provided by Ala345, Gln348, Gly349, Pro350, and Gly353.

Belongs to the cyclic amide hydrolase (CyAH) family. In terms of assembly, homotetramer.

The enzyme catalyses cyanurate + H2O = 1-carboxybiuret + H(+). It participates in xenobiotic degradation; atrazine degradation; biuret from cyanurate: step 1/1. With respect to regulation, inhibited by barbituric acid. Its function is as follows. Responsible for the hydrolysis of cyanuric acid, an intermediate formed during catabolism of s-triazine based compounds in herbicides such as atrazine and polymers such as melamine. Catalyzes the hydrolytic opening of the s-triazine ring of cyanuric acid (2,4,6-trihydroxy-s-triazine) to yield carbon dioxide and carboxybiuret, which spontaneously decarboxylates to biuret. The sequence is that of Cyanuric acid amidohydrolase from Methylobacterium sp. (strain 4-46).